Consider the following 431-residue polypeptide: Argininosuccinate lyase (431 aa).

The protein belongs to the lyase 1 family. Argininosuccinate lyase subfamily.

The protein resides in the cytoplasm. It catalyses the reaction 2-(N(omega)-L-arginino)succinate = fumarate + L-arginine. Its pathway is amino-acid biosynthesis; L-arginine biosynthesis; L-arginine from L-ornithine and carbamoyl phosphate: step 3/3. This chain is Argininosuccinate lyase, found in Xanthomonas oryzae pv. oryzae (strain MAFF 311018).